Consider the following 301-residue polypeptide: Probable alpha-L-glutamate ligase (301 aa).

The ATP-grasp domain maps to Leu-104–Glu-287. Residues Lys-141, Glu-178–Tyr-179, Asp-187, and Arg-211–Asn-213 contribute to the ATP site. Mg(2+) is bound by residues Asp-248, Glu-260, and Asn-262. 3 residues coordinate Mn(2+): Asp-248, Glu-260, and Asn-262.

Belongs to the RimK family. The cofactor is Mg(2+). Mn(2+) serves as cofactor.

The sequence is that of Probable alpha-L-glutamate ligase from Pseudoalteromonas translucida (strain TAC 125).